Reading from the N-terminus, the 190-residue chain is Threonylcarbamoyl-AMP synthase (190 aa).

A YrdC-like domain is found at 7 to 190 (LGSIAQAVDV…ALTGERFRQG (184 aa)).

This sequence belongs to the SUA5 family. TsaC subfamily.

The protein resides in the cytoplasm. The catalysed reaction is L-threonine + hydrogencarbonate + ATP = L-threonylcarbamoyladenylate + diphosphate + H2O. Required for the formation of a threonylcarbamoyl group on adenosine at position 37 (t(6)A37) in tRNAs that read codons beginning with adenine. Catalyzes the conversion of L-threonine, HCO(3)(-)/CO(2) and ATP to give threonylcarbamoyl-AMP (TC-AMP) as the acyladenylate intermediate, with the release of diphosphate. The protein is Threonylcarbamoyl-AMP synthase of Enterobacter sp. (strain 638).